The chain runs to 297 residues: ATP synthase subunit gamma, mitochondrial (297 aa).

The protein belongs to the ATPase gamma chain family. In terms of assembly, F-type ATPases have 2 components, CF(1) - the catalytic core - and CF(0) - the membrane proton channel. CF(1) has five subunits: alpha(3), beta(3), gamma(1), delta(1), epsilon(1). CF(0) has three main subunits: a, b and c.

Its subcellular location is the mitochondrion. The protein localises to the mitochondrion inner membrane. Mitochondrial membrane ATP synthase (F(1)F(0) ATP synthase or Complex V) produces ATP from ADP in the presence of a proton gradient across the membrane which is generated by electron transport complexes of the respiratory chain. F-type ATPases consist of two structural domains, F(1) - containing the extramembraneous catalytic core, and F(0) - containing the membrane proton channel, linked together by a central stalk and a peripheral stalk. During catalysis, ATP synthesis in the catalytic domain of F(1) is coupled via a rotary mechanism of the central stalk subunits to proton translocation. Part of the complex F(1) domain and the central stalk which is part of the complex rotary element. The gamma subunit protrudes into the catalytic domain formed of alpha(3)beta(3). Rotation of the central stalk against the surrounding alpha(3)beta(3) subunits leads to hydrolysis of ATP in three separate catalytic sites on the beta subunits. The sequence is that of ATP synthase subunit gamma, mitochondrial from Drosophila melanogaster (Fruit fly).